The primary structure comprises 79 residues: Small integral membrane protein 40 (79 aa).

The helical transmembrane segment at 35–55 threads the bilayer; sequence FFIFLALFLTLLMLEAAYKLL.

It is found in the membrane. The sequence is that of Small integral membrane protein 40 from Homo sapiens (Human).